Reading from the N-terminus, the 40-residue chain is U1-ectatotoxin-Eb1a subunit A (40 aa).

Belongs to the ectatomin family. Ectatomin-Eq subfamily. Heterodimer of subunits A and B; disulfide-linked. In terms of tissue distribution, expressed by the venom gland.

It is found in the secreted. The protein resides in the target cell membrane. This is U1-ectatotoxin-Eb1a subunit A from Ectatomma brunneum (Ant).